The primary structure comprises 906 residues: Patched domain-containing protein 3 (906 aa).

Residues 1 to 70 (MISSKVAPGE…LGQEAPPPRR (70 aa)) are disordered. N-linked (GlcNAc...) asparagine glycosylation is found at N148 and N235. 11 helical membrane passes run 338 to 358 (TVIP…VVSC), 370 to 390 (VAVF…GLML), 392 to 412 (LGVP…GVGV), 442 to 462 (VAVS…TGIT), 476 to 496 (GTTL…VMAL), 559 to 579 (FIVV…CFQV), 760 to 780 (VMIA…HPVC), 782 to 802 (LWVT…MAFW), 814 to 834 (LVIC…AFVS), 848 to 868 (LYLL…GVCV), and 883 to 903 (IMFL…PVFL). One can recognise an SSD domain in the interval 339-496 (VIPLFHLAYI…ITCFGAVMAL (158 aa)).

It belongs to the patched family. Expressed in germ cells of the testis (at protein level).

It is found in the cell projection. The protein resides in the cilium. Its subcellular location is the flagellum membrane. It localises to the endoplasmic reticulum membrane. May play a role in sperm development or sperm function. However, does not appear to have an essential role in spermatogenesis or male fertility. The sequence is that of Patched domain-containing protein 3 (Ptchd3) from Mus musculus (Mouse).